The chain runs to 114 residues: NADH-ubiquinone oxidoreductase chain 3 (114 aa).

3 helical membrane-spanning segments follow: residues 1–21 (MIFY…MLFF), 55–75 (FFFV…ILPF), and 85–105 (MFVF…LYEF).

Belongs to the complex I subunit 3 family.

Its subcellular location is the mitochondrion membrane. The catalysed reaction is a ubiquinone + NADH + 5 H(+)(in) = a ubiquinol + NAD(+) + 4 H(+)(out). In terms of biological role, core subunit of the mitochondrial membrane respiratory chain NADH dehydrogenase (Complex I) that is believed to belong to the minimal assembly required for catalysis. Complex I functions in the transfer of electrons from NADH to the respiratory chain. The immediate electron acceptor for the enzyme is believed to be ubiquinone. This chain is NADH-ubiquinone oxidoreductase chain 3 (ND3), found in Rhipicephalus sanguineus (Brown dog tick).